Here is a 388-residue protein sequence, read N- to C-terminus: Succinate--CoA ligase [ADP-forming] subunit beta (388 aa).

Residues 9 to 245 (KELLASYGLP…KSQENERELK (237 aa)) form the ATP-grasp domain. ATP is bound by residues Lys46, 53-55 (GRG), Glu100, Tyr103, and Glu108. The Mg(2+) site is built by Asn200 and Asp214. Substrate-binding positions include Asn265 and 322–324 (GIV).

Belongs to the succinate/malate CoA ligase beta subunit family. Heterotetramer of two alpha and two beta subunits. Requires Mg(2+) as cofactor.

It carries out the reaction succinate + ATP + CoA = succinyl-CoA + ADP + phosphate. The enzyme catalyses GTP + succinate + CoA = succinyl-CoA + GDP + phosphate. Its pathway is carbohydrate metabolism; tricarboxylic acid cycle; succinate from succinyl-CoA (ligase route): step 1/1. Its function is as follows. Succinyl-CoA synthetase functions in the citric acid cycle (TCA), coupling the hydrolysis of succinyl-CoA to the synthesis of either ATP or GTP and thus represents the only step of substrate-level phosphorylation in the TCA. The beta subunit provides nucleotide specificity of the enzyme and binds the substrate succinate, while the binding sites for coenzyme A and phosphate are found in the alpha subunit. The chain is Succinate--CoA ligase [ADP-forming] subunit beta from Neisseria gonorrhoeae (strain NCCP11945).